Here is a 264-residue protein sequence, read N- to C-terminus: uncharacterized protein (264 aa).

The chain crosses the membrane as a helical span at residues 9–29 (LVISILSLIATLSISFNIYFI).

The protein localises to the membrane. This is an uncharacterized protein from Ureaplasma parvum serovar 3 (strain ATCC 700970).